We begin with the raw amino-acid sequence, 241 residues long: Fas-associated death domain protein (241 aa).

A death-inducing region spans residues 1 to 101 (MPGNHWYDIL…VNIYQEERLA (101 aa)). The Death domain occupies 151–237 (RKRTAVFNKI…RNDIKRKVEQ (87 aa)).

N-terminus interacts with Dredd. Interacts with imd.

It is found in the cytoplasm. Functionally, component of the IMD signaling pathway and is required for the host defense against Gram-negative bacteria. Interacts with Dredd, promotes cleavage of Dredd and is necessary and sufficient for enhancing Dredd-induced apoptosis. The sequence is that of Fas-associated death domain protein (Fadd) from Drosophila pseudoobscura pseudoobscura (Fruit fly).